The chain runs to 604 residues: Numb-like protein (604 aa).

Disordered stretches follow at residues 1-68 (MSRS…QWQA), 223-283 (GSFR…PVAA), 372-457 (ASAG…TLQP), and 531-604 (KAGA…EIEL). The 152-residue stretch at 74 to 225 (RKGTCSFPVR…RTSFAREGSF (152 aa)) folds into the PID domain. A phosphoserine mark is found at Ser224 and Ser228. Over residues 233–245 (PAEREAGDKKKAE) the composition is skewed to basic and acidic residues. The segment covering 246–260 (AAAAPAVAPGPAQPG) has biased composition (low complexity). At Ser263 the chain carries Phosphoserine. Residue Thr279 is modified to Phosphothreonine. The segment covering 409-418 (TPSEAERWLE) has biased composition (basic and acidic residues). Ser411 carries the phosphoserine modification. 2 stretches are compositionally biased toward low complexity: residues 427 to 441 (QQQQ…QQQQ) and 542 to 552 (SAPGGQARPRP). The segment covering 553 to 568 (NGAPWPPEPAPAPAPE) has biased composition (pro residues).

In terms of assembly, interacts (via PTB domain) with MAP3K7IP2 (via C-terminal). Interacts (via C-terminal) with TRAF6 (via TRAF domains). Associates with EPS15 and NOTCH1. Preferentially expressed in the nervous system. In the developing neocortex, expressed in postmitotic neurons in the cortical plate but not in progenitors within the ventricular zone.

The protein resides in the cytoplasm. Its function is as follows. Plays a role in the process of neurogenesis. Required throughout embryonic neurogenesis to maintain neural progenitor cells, also called radial glial cells (RGCs), by allowing their daughter cells to choose progenitor over neuronal cell fate. Not required for the proliferation of neural progenitor cells before the onset of embryonic neurogenesis. Also required postnatally in the subventricular zone (SVZ) neurogenesis by regulating SVZ neuroblasts survival and ependymal wall integrity. Negative regulator of NF-kappa-B signaling pathway. The inhibition of NF-kappa-B activation is mediated at least in part, by preventing MAP3K7IP2 to interact with polyubiquitin chains of TRAF6 and RIPK1 and by stimulating the 'Lys-48'-linked polyubiquitination and degradation of TRAF6 in cortical neurons. This is Numb-like protein (Numbl) from Mus musculus (Mouse).